Here is a 238-residue protein sequence, read N- to C-terminus: MMKKKSWFTLMITGVISLFFSVSAFAGNVFWEPLSYFNSSTWQKADGYSNGQMFNCTWRANNVNFTNDGKLKLSLTSPANNKFDCGEYRSTNNYGYGLYEVSMKPAKNTGIVSSFFTYTGPSHGTQWDEIDIEFLGKDTTKVQFNYYTNGVGGHEKIINLGFDASTSFHTYAFDWQPGYIKWYVDGVLKHTATTNIPSTPGKIMMNLWNGTGVDSWLGSYNGANPLYAEYDWVKYTSN.

Positions 1–26 (MMKKKSWFTLMITGVISLFFSVSAFA) are cleaved as a signal peptide. Residues 29–238 (VFWEPLSYFN…EYDWVKYTSN (210 aa)) form the GH16 domain. A disulfide bond links cysteine 56 and cysteine 85. The active-site Nucleophile is glutamate 129. Glutamate 133 (proton donor) is an active-site residue.

The protein belongs to the glycosyl hydrolase 16 family.

It carries out the reaction Hydrolysis of (1-&gt;4)-beta-D-glucosidic linkages in beta-D-glucans containing (1-&gt;3)- and (1-&gt;4)-bonds.. This is Beta-glucanase (gluB) from Paenibacillus polymyxa (Bacillus polymyxa).